The chain runs to 23 residues: Benzaldehyde dehydrogenase [NAD(+)] I (23 aa).

Belongs to the aldehyde dehydrogenase family. In terms of assembly, homotetramer.

The catalysed reaction is benzaldehyde + NAD(+) + H2O = benzoate + NADH + 2 H(+). This Acinetobacter guillouiae (Acinetobacter genomosp. 11) protein is Benzaldehyde dehydrogenase [NAD(+)] I.